Here is a 204-residue protein sequence, read N- to C-terminus: Uracil-DNA glycosylase (204 aa).

D47 (proton acceptor) is an active-site residue.

Belongs to the uracil-DNA glycosylase (UDG) superfamily. UNG family.

It is found in the host nucleus. The enzyme catalyses Hydrolyzes single-stranded DNA or mismatched double-stranded DNA and polynucleotides, releasing free uracil.. Functionally, excises uracil residues from the DNA which can arise as a result of misincorporation of dUMP residues by DNA polymerase or deamination of cytosines. Therefore may reduce deleterious uracil incorporation into the viral genome, particularly in terminally differentiated cells which lack DNA repair enzymes. The chain is Uracil-DNA glycosylase (UL2) from Bos taurus (Bovine).